Consider the following 346-residue polypeptide: Phosphoribosylformylglycinamidine cyclo-ligase (346 aa).

Belongs to the AIR synthase family.

It localises to the cytoplasm. The catalysed reaction is 2-formamido-N(1)-(5-O-phospho-beta-D-ribosyl)acetamidine + ATP = 5-amino-1-(5-phospho-beta-D-ribosyl)imidazole + ADP + phosphate + H(+). It participates in purine metabolism; IMP biosynthesis via de novo pathway; 5-amino-1-(5-phospho-D-ribosyl)imidazole from N(2)-formyl-N(1)-(5-phospho-D-ribosyl)glycinamide: step 2/2. This is Phosphoribosylformylglycinamidine cyclo-ligase from Bacillus mycoides (strain KBAB4) (Bacillus weihenstephanensis).